A 443-amino-acid polypeptide reads, in one-letter code: ATP synthase subunit b-delta (443 aa).

The segment at 1–168 (MSTFIGQLIG…PSDAALDDAV (168 aa)) is ATP synthase subunit b. The helical transmembrane segment at 4-24 (FIGQLIGFAVIVFLLVRFVVP) threads the bilayer. An ATP synthase subunit delta region spans residues 169-443 (GSRMRSTSRE…LASAETQLPD (275 aa)).

In the N-terminal section; belongs to the ATPase B chain family. The protein in the C-terminal section; belongs to the ATPase delta chain family. F-type ATPases have 2 components, F(1) - the catalytic core - and F(0) - the membrane proton channel. F(1) has five subunits: alpha(3), beta(3), gamma(1), delta(1), epsilon(1). F(0) has three main subunits: a(1), b(2) and c(10-14). The alpha and beta chains form an alternating ring which encloses part of the gamma chain. F(1) is attached to F(0) by a central stalk formed by the gamma and epsilon chains, while a peripheral stalk is formed by the delta and b chains.

It localises to the cell membrane. In terms of biological role, f(1)F(0) ATP synthase produces ATP from ADP in the presence of a proton or sodium gradient. F-type ATPases consist of two structural domains, F(1) containing the extramembraneous catalytic core and F(0) containing the membrane proton channel, linked together by a central stalk and a peripheral stalk. During catalysis, ATP synthesis in the catalytic domain of F(1) is coupled via a rotary mechanism of the central stalk subunits to proton translocation. Functionally, this fusion protein includes a component of the F(0) channel (subunit b) and of the F(1) subunit (subunit delta). Two copies of subunit b and one of delta together form the peripheral 'stator' stalk which links F(1) to F(0). This Mycobacterium sp. (strain JLS) protein is ATP synthase subunit b-delta (atpFH).